Consider the following 314-residue polypeptide: GTPase-interacting component 1 (314 aa).

Disordered regions lie at residues 112–156, 199–221, and 241–261; these read SRRH…KHDV, TMDS…QLDS, and LGDS…SFSG. The region spanning 126–139 is the CRIB domain; it reads ISTPFDFHHISHAN. Residues 140–156 are compositionally biased toward basic and acidic residues; that stretch reads GKREDNPLESHEEKHDV. Residues 208 to 221 are compositionally biased toward polar residues; the sequence is ETNNTPNGNKQLDS. A compositionally biased stretch (low complexity) spans 251 to 260; it reads PSSPSVSSFS.

This sequence belongs to the BORG/CEP family. As to quaternary structure, interacts with GTP-bound CDC42.

The protein localises to the bud neck. It localises to the bud tip. The protein resides in the cytoplasm. Its subcellular location is the cell cortex. It is found in the cytoskeleton. Required for cell size and shape control, bud site selection, bud emergence, actin cytoskeletal organization, mitotic spindle orientation/positioning, and mating projection formation in response to mating pheromone. The sequence is that of GTPase-interacting component 1 (GIC1) from Saccharomyces cerevisiae (strain ATCC 204508 / S288c) (Baker's yeast).